Consider the following 205-residue polypeptide: uncharacterized protein (205 aa).

The region spanning 1–82 (MIKVYGVPGW…MVLDRRPDLA (82 aa)) is the GST N-terminal domain. Glutathione is bound by residues valine 53 and 66-67 (ET). The GST C-terminal domain maps to 86–205 (GRAERQLFQR…QEVLKRNEII (120 aa)).

The protein belongs to the GST superfamily. Beta family.

This is an uncharacterized protein from Escherichia coli (strain K12).